The sequence spans 376 residues: 26S proteasome non-ATPase regulatory subunit 13 (376 aa).

Residues 171–338 (SYYKDALRFL…KRVHMTWVQP (168 aa)) form the PCI domain.

It belongs to the proteasome subunit S11 family. As to quaternary structure, component of the 19S proteasome regulatory particle complex. The 26S proteasome consists of a 20S core particle (CP) and two 19S regulatory subunits (RP). The regulatory particle is made of a lid composed of 9 subunits including PSMD13, a base containing 6 ATPases and few additional components.

Its function is as follows. Component of the 26S proteasome, a multiprotein complex involved in the ATP-dependent degradation of ubiquitinated proteins. This complex plays a key role in the maintenance of protein homeostasis by removing misfolded or damaged proteins, which could impair cellular functions, and by removing proteins whose functions are no longer required. Therefore, the proteasome participates in numerous cellular processes, including cell cycle progression, apoptosis, or DNA damage repair. This chain is 26S proteasome non-ATPase regulatory subunit 13 (PSMD13), found in Bos taurus (Bovine).